Reading from the N-terminus, the 297-residue chain is Probable endonuclease 4 (297 aa).

9 residues coordinate Zn(2+): His-69, His-110, Glu-145, Asp-179, His-182, His-214, Asp-227, His-229, and Glu-259.

It belongs to the AP endonuclease 2 family. Zn(2+) serves as cofactor.

The catalysed reaction is Endonucleolytic cleavage to 5'-phosphooligonucleotide end-products.. Functionally, endonuclease IV plays a role in DNA repair. It cleaves phosphodiester bonds at apurinic or apyrimidinic (AP) sites, generating a 3'-hydroxyl group and a 5'-terminal sugar phosphate. This chain is Probable endonuclease 4, found in Listeria monocytogenes serotype 4b (strain CLIP80459).